Reading from the N-terminus, the 510-residue chain is DAP3-binding cell death enhancer 1 (510 aa).

A mitochondrion-targeting transit peptide spans 1–23 (MWRLTGILGRALPRLLGPGFRGI). 2 disordered regions span residues 19 to 61 (GFRG…SRDP) and 142 to 185 (VLPR…SGLL). The propeptide at 24 to 101 (TPKPTSSDGS…AVLALHLARQ (78 aa)) is extended MTS. Low complexity predominate over residues 35–45 (TTSPTLPLTRL). Composition is skewed to basic and acidic residues over residues 46–61 (SFDRSGSHGSKRSRDP) and 155–167 (GLREPRQGQEDHP). Residues 169 to 181 (APSQCLPSDSSLR) are compositionally biased toward polar residues. TPR repeat units lie at residues 213-245 (AHPPGGKNEQDKAKALPLEEAVTSIQQLFQLSV), 246-278 (AITFNFLGTENIKTGDYTAAFSYFQKAADRGYS), 279-313 (KAQYNVGLCLEHGRGTPRDLSKAILFYHLAAVQGH), 314-351 (SLAQYRYARCLLQSPGSLSDPERERAVSLLKQAADSGL), 352-385 (TEAQAFLGVLFTKEPHLDEQRAVKYLWLAASNGD), 386-423 (SQSRFHLGICYEKGLGAQRNLGEAVKCYQQAAAMGNEP), and 471-499 (ASSTGNLGLLCRSGHLGASHGAPSRTIPS). Positions 307–326 (LAAVQGHSLAQYRYARCLLQ) match the SIFI-degron motif.

Belongs to the DELE1 family. As to quaternary structure, interacts with DAP3. In terms of assembly, interacts (via TPR repeats) with EIF2AK1/HRI; activating the protein kinase activity of EIF2AK1/HRI, thereby promoting the integrated stress response (ISR). Homooctamer; oligomerization is required to activate EIF2AK1/HRI. Interacts (via TPR repeats) with EIF2AK1/HRI; activating the protein kinase activity of EIF2AK1/HRI, thereby promoting the integrated stress response (ISR). In terms of processing, unstable protein in absence of stress: imported in the mitochondrial matrix following processing by the mitochondrial-processing peptidase (MPP), where it is degraded by LONP1. Stabilized in response to iron deficiency: iron deficiency impairs mitochondrial import, promoting localization at the mitochondrial surface and stabilization. Cleaved by OMA1 in response to mitochondrial stress, generating the DAP3-binding cell death enhancer 1 short form (DELE1(S) or S-DELE1) that accumulates in the cytosol and activates the protein kinase activity of EIF2AK1/HRI. Protein cleavage by OMA1 can take place at different positions, and apparently does not require a specific sequence motif. Post-translationally, ubiquitinated and degraded by the SIFI complex once the mitochondrial stress has been resolved, thereby providing stress response silencing. Within the SIFI complex, UBR4 initiates ubiquitin chain that are further elongated or branched by KCMF1.

Its subcellular location is the mitochondrion. The protein localises to the mitochondrion outer membrane. The protein resides in the mitochondrion inner membrane. It localises to the cytoplasm. It is found in the cytosol. Protein kinase activator that acts as a key activator of the integrated stress response (ISR) following various stresses, such as iron deficiency, mitochondrial stress or mitochondrial DNA breaks. Detects impaired protein import and processing in mitochondria, activating the ISR. May also required for the induction of death receptor-mediated apoptosis through the regulation of caspase activation. Functionally, protein kinase activator that activates the ISR in response to iron deficiency: iron deficiency impairs mitochondrial import, promoting DELE1 localization at the mitochondrial surface, where it binds and activates EIF2AK1/HRI to trigger the ISR. In terms of biological role, protein kinase activator generated by protein cleavage in response to mitochondrial stress, which accumulates in the cytosol and specifically binds to and activates the protein kinase activity of EIF2AK1/HRI. It thereby activates the integrated stress response (ISR): EIF2AK1/HRI activation promotes eIF-2-alpha (EIF2S1) phosphorylation, leading to a decrease in global protein synthesis and the induction of selected genes, including the transcription factor ATF4, the master transcriptional regulator of the ISR. Also acts as an activator of PRKN-independent mitophagy: activates the protein kinase activity of EIF2AK1/HRI in response to mitochondrial damage, promoting eIF-2-alpha (EIF2S1) phosphorylation, leading to mitochondrial localization of EIF2S1 followed by induction of mitophagy. The sequence is that of DAP3-binding cell death enhancer 1 from Mus musculus (Mouse).